A 772-amino-acid polypeptide reads, in one-letter code: RNA exonuclease 5 (772 aa).

Basic and acidic residues predominate over residues 1 to 10 (MEPEREGTER). Residues 1–26 (MEPEREGTERHPRKVRKRRQAPNKLV) form a disordered region. The segment covering 11–21 (HPRKVRKRRQA) has biased composition (basic residues). Residues 228 to 376 (LFGLDCEMCL…EDARIILELA (149 aa)) enclose the Exonuclease domain. 2 consecutive RRM domains span residues 505-579 (STVY…RPVT) and 600-679 (GSIY…RHLH).

This chain is RNA exonuclease 5 (REXO5), found in Macaca fascicularis (Crab-eating macaque).